Reading from the N-terminus, the 445-residue chain is FAS-associated factor 2 (445 aa).

In terms of domain architecture, UBA spans glutamate 12–glutamate 53. Positions serine 275–glutamate 353 form a coiled coil. A compositionally biased stretch (basic and acidic residues) spans alanine 303–glutamate 348. The interval alanine 303–proline 354 is disordered. Residues aspartate 357 to valine 439 enclose the UBX domain.

It is found in the cytoplasm. It localises to the lipid droplet. Its subcellular location is the endoplasmic reticulum. Functionally, plays an important role in endoplasmic reticulum-associated degradation (ERAD) that mediates ubiquitin-dependent degradation of misfolded endoplasmic reticulum proteins. Involved in inhibition of lipid droplet degradation. Involved in stress granule disassembly. The polypeptide is FAS-associated factor 2 (faf2) (Xenopus tropicalis (Western clawed frog)).